The primary structure comprises 218 residues: Large ribosomal subunit protein uL3c (218 aa).

Residues 127 to 161 are disordered; that stretch reads GFSRGPMTHGSKNHREPGSTGAGTTPGRIYPGKRM.

The protein belongs to the universal ribosomal protein uL3 family. Part of the 50S ribosomal subunit.

The protein resides in the plastid. It is found in the organellar chromatophore. Functionally, one of the primary rRNA binding proteins, it binds directly near the 3'-end of the 23S rRNA, where it nucleates assembly of the 50S subunit. This is Large ribosomal subunit protein uL3c (rpl3) from Paulinella chromatophora.